A 244-amino-acid chain; its full sequence is tRNA pseudouridine synthase A (244 aa).

Catalysis depends on Asp52, which acts as the Nucleophile. Tyr110 contributes to the substrate binding site.

This sequence belongs to the tRNA pseudouridine synthase TruA family. As to quaternary structure, homodimer.

It carries out the reaction uridine(38/39/40) in tRNA = pseudouridine(38/39/40) in tRNA. Functionally, formation of pseudouridine at positions 38, 39 and 40 in the anticodon stem and loop of transfer RNAs. The protein is tRNA pseudouridine synthase A of Acetivibrio thermocellus (strain ATCC 27405 / DSM 1237 / JCM 9322 / NBRC 103400 / NCIMB 10682 / NRRL B-4536 / VPI 7372) (Clostridium thermocellum).